The sequence spans 715 residues: 1,4-alpha-glucan branching enzyme GlgB (715 aa).

Aspartate 396 (nucleophile) is an active-site residue. Glutamate 449 functions as the Proton donor in the catalytic mechanism.

It belongs to the glycosyl hydrolase 13 family. GlgB subfamily. In terms of assembly, monomer.

The enzyme catalyses Transfers a segment of a (1-&gt;4)-alpha-D-glucan chain to a primary hydroxy group in a similar glucan chain.. It functions in the pathway glycan biosynthesis; glycogen biosynthesis. Functionally, catalyzes the formation of the alpha-1,6-glucosidic linkages in glycogen by scission of a 1,4-alpha-linked oligosaccharide from growing alpha-1,4-glucan chains and the subsequent attachment of the oligosaccharide to the alpha-1,6 position. The polypeptide is 1,4-alpha-glucan branching enzyme GlgB (Vibrio vulnificus (strain CMCP6)).